A 259-amino-acid polypeptide reads, in one-letter code: Uridylate kinase (259 aa).

21 to 24 (KLSG) lines the ATP pocket. Residue Gly-63 coordinates UMP. Positions 64 and 68 each coordinate ATP. Residues Asp-83 and 144-151 (TGNPYFTT) contribute to the UMP site. ATP-binding residues include Thr-171, Phe-177, and Asp-180.

The protein belongs to the UMP kinase family. As to quaternary structure, homohexamer.

The protein resides in the cytoplasm. The catalysed reaction is UMP + ATP = UDP + ADP. It participates in pyrimidine metabolism; CTP biosynthesis via de novo pathway; UDP from UMP (UMPK route): step 1/1. Its activity is regulated as follows. Inhibited by UTP. In terms of biological role, catalyzes the reversible phosphorylation of UMP to UDP. The protein is Uridylate kinase of Salinibacter ruber (strain DSM 13855 / M31).